We begin with the raw amino-acid sequence, 255 residues long: Probable iron chelatin transport ATP-binding protein HP_0888 (255 aa).

One can recognise an ABC transporter domain in the interval 3-240 (LEVKNLSFKY…HNLSALYDTP (238 aa)). Residue 35–42 (APNGSGKT) coordinates ATP.

It belongs to the ABC transporter superfamily.

Its subcellular location is the cell inner membrane. Part of a binding-protein-dependent transport system for an iron chelatin. Probably responsible for energy coupling to the transport system (Potential). The polypeptide is Probable iron chelatin transport ATP-binding protein HP_0888 (Helicobacter pylori (strain ATCC 700392 / 26695) (Campylobacter pylori)).